Reading from the N-terminus, the 81-residue chain is U6-theraphotoxin-Hs1a (81 aa).

The first 21 residues, 1 to 21 (MKASMFLALAGLVLLFVVCYA), serve as a signal peptide directing secretion. Residues 22-48 (SESEEKEFPRELLSTIFAVDDFKGEER) constitute a propeptide that is removed on maturation. 2 cysteine pairs are disulfide-bonded: Cys50/Cys65 and Cys57/Cys70.

It belongs to the neurotoxin 10 (Hwtx-1) family. 51 (Hntx-8) subfamily. Expressed by the venom gland.

It localises to the secreted. In terms of biological role, binds to the nicotinic acetylcholine receptor. Blocks neuromuscular transmission. This chain is U6-theraphotoxin-Hs1a, found in Cyriopagopus schmidti (Chinese bird spider).